The primary structure comprises 435 residues: D-amino acid dehydrogenase (435 aa).

Residue 3–17 (VIVLGGGVLGVSTAW) participates in FAD binding.

It belongs to the DadA oxidoreductase family. Requires FAD as cofactor.

It carries out the reaction a D-alpha-amino acid + A + H2O = a 2-oxocarboxylate + AH2 + NH4(+). Its pathway is amino-acid degradation; D-alanine degradation; NH(3) and pyruvate from D-alanine: step 1/1. Functionally, oxidative deamination of D-amino acids. This Chromobacterium violaceum (strain ATCC 12472 / DSM 30191 / JCM 1249 / CCUG 213 / NBRC 12614 / NCIMB 9131 / NCTC 9757 / MK) protein is D-amino acid dehydrogenase.